The primary structure comprises 71 residues: Keratin-associated protein 6-1 (71 aa).

Belongs to the KRTAP type 6 family. As to quaternary structure, interacts with hair keratins.

Its function is as follows. In the hair cortex, hair keratin intermediate filaments are embedded in an interfilamentous matrix, consisting of hair keratin-associated proteins (KRTAP), which are essential for the formation of a rigid and resistant hair shaft through their extensive disulfide bond cross-linking with abundant cysteine residues of hair keratins. The matrix proteins include the high-sulfur and high-glycine-tyrosine keratins. This chain is Keratin-associated protein 6-1 (KRTAP6-1), found in Homo sapiens (Human).